The following is a 175-amino-acid chain: Methylated-DNA--protein-cysteine methyltransferase (175 aa).

Catalysis depends on Cys142, which acts as the Nucleophile; methyl group acceptor.

This sequence belongs to the MGMT family.

The protein resides in the cytoplasm. The catalysed reaction is a 6-O-methyl-2'-deoxyguanosine in DNA + L-cysteinyl-[protein] = S-methyl-L-cysteinyl-[protein] + a 2'-deoxyguanosine in DNA. It catalyses the reaction a 4-O-methyl-thymidine in DNA + L-cysteinyl-[protein] = a thymidine in DNA + S-methyl-L-cysteinyl-[protein]. Its function is as follows. Involved in the cellular defense against the biological effects of O6-methylguanine (O6-MeG) and O4-methylthymine (O4-MeT) in DNA. Repairs the methylated nucleobase in DNA by stoichiometrically transferring the methyl group to a cysteine residue in the enzyme. This is a suicide reaction: the enzyme is irreversibly inactivated. The polypeptide is Methylated-DNA--protein-cysteine methyltransferase (Thermococcus barophilus (strain DSM 11836 / MP)).